The following is a 117-amino-acid chain: Large ribosomal subunit protein bL20 (117 aa).

This sequence belongs to the bacterial ribosomal protein bL20 family.

Binds directly to 23S ribosomal RNA and is necessary for the in vitro assembly process of the 50S ribosomal subunit. It is not involved in the protein synthesizing functions of that subunit. This is Large ribosomal subunit protein bL20 from Campylobacter hominis (strain ATCC BAA-381 / DSM 21671 / CCUG 45161 / LMG 19568 / NCTC 13146 / CH001A).